Reading from the N-terminus, the 548-residue chain is Putative ATP-dependent RNA helicase R290 (548 aa).

A Helicase ATP-binding domain is found at 38 to 206 (INKVINGEDV…CKVLQLKTNE (169 aa)). Residue 51 to 58 (LMTSAGKS) participates in ATP binding. Positions 150 to 153 (DEAH) match the DEAH box motif. The region spanning 231-376 (DIVPIINKYP…KTQLALLEQM (146 aa)) is the Helicase C-terminal domain.

The protein belongs to the DEAD box helicase family. DEAH subfamily.

It carries out the reaction ATP + H2O = ADP + phosphate + H(+). This Acanthamoeba polyphaga mimivirus (APMV) protein is Putative ATP-dependent RNA helicase R290.